The sequence spans 318 residues: Formimidoylglutamase (318 aa).

H130, D155, H157, D159, D246, and D248 together coordinate Mn(2+).

Belongs to the arginase family. Mn(2+) serves as cofactor.

It carries out the reaction N-formimidoyl-L-glutamate + H2O = formamide + L-glutamate. The protein operates within amino-acid degradation; L-histidine degradation into L-glutamate; L-glutamate from N-formimidoyl-L-glutamate (hydrolase route): step 1/1. In terms of biological role, catalyzes the conversion of N-formimidoyl-L-glutamate to L-glutamate and formamide. The chain is Formimidoylglutamase from Klebsiella pneumoniae (strain 342).